Reading from the N-terminus, the 146-residue chain is Envelope protein OPG155 (146 aa).

A helical; Signal-anchor for type II membrane protein membrane pass occupies residues 1–21 (MNSLSIFFIVVATAAVCLLFI). At 22 to 146 (QGYSIYENYG…VECQFLKSVL (125 aa)) the chain is on the virion surface side.

This sequence belongs to the orthopoxvirus OPG155 protein family. In terms of assembly, part of a stable entry-fusion complex (EFC) which is at least composed of proteins OPG143, OPG147, OPG155, OPG086, OPG094, OPG107, OPG104, and OPG099. Formation of the viral membrane is necessary for the assembly of the complex. Interacts directly with protein OPG107. Contains two intramolecular disulfide bonds. They are created by the viral disulfide bond formation pathway, a poxvirus-specific pathway that operates on the cytoplasmic side of the MV membranes.

It localises to the virion membrane. Its function is as follows. Envelope protein required for virus entry into host cell and for cell-cell fusion (syncytium formation). The chain is Envelope protein OPG155 (OPG155) from Camelus.